Reading from the N-terminus, the 350-residue chain is MNKITVLCVDDSALMRQIMREIINSHSDMEVVACAPDPLVARDLIKKHNPQVLTLDVEMPRMDGIDFLEKLMRLRPMPVVMISSLTAKGSEITLRALELGAVDFITKPQLGIREGMLAYSELIAEKIRTAAQAKLSVPIITPVSSAPLSFKPLLSSEKLIAVGASTGGTEAIKNLLQPLPVTSPALLITQHMPPGFTRSFAERLNKLSQITVKEAENGERILPGHAYIAPGDRHMELCRNGADYQVLITDAPAVNRHRPSVDVLFRSVAKFAGKNAVGVLLTGMGSDGAAGLLEMKQAGAYTLAQDEASCVVFGMPRAAIQMGAVDEVMDILKMSKRMLAKISSGQAVRI.

The region spanning 5–122 (TVLCVDDSAL…REGMLAYSEL (118 aa)) is the Response regulatory domain. 4-aspartylphosphate is present on Asp-56. The CheB-type methylesterase domain occupies 153-345 (LLSSEKLIAV…KRMLAKISSG (193 aa)). Residues Ser-165, His-191, and Asp-287 contribute to the active site.

Belongs to the CheB family. Post-translationally, phosphorylated by CheA. Phosphorylation of the N-terminal regulatory domain activates the methylesterase activity.

The protein localises to the cytoplasm. The enzyme catalyses [protein]-L-glutamate 5-O-methyl ester + H2O = L-glutamyl-[protein] + methanol + H(+). The catalysed reaction is L-glutaminyl-[protein] + H2O = L-glutamyl-[protein] + NH4(+). Functionally, involved in chemotaxis. Part of a chemotaxis signal transduction system that modulates chemotaxis in response to various stimuli. Catalyzes the demethylation of specific methylglutamate residues introduced into the chemoreceptors (methyl-accepting chemotaxis proteins or MCP) by CheR. Also mediates the irreversible deamidation of specific glutamine residues to glutamic acid. The polypeptide is Protein-glutamate methylesterase/protein-glutamine glutaminase (Photorhabdus laumondii subsp. laumondii (strain DSM 15139 / CIP 105565 / TT01) (Photorhabdus luminescens subsp. laumondii)).